The primary structure comprises 294 residues: Tetraspanin-15 (294 aa).

The Cytoplasmic segment spans residues 1-23; it reads MPRGDSEQVRYCARFSYLWLKFS. The helical transmembrane segment at 24–44 threads the bilayer; it reads LVIYSTVFWLIGGLVLSVGIY. Topologically, residues 45–62 are extracellular; sequence AEVERQKYKTLESAFLAP. Residues 63 to 83 traverse the membrane as a helical segment; that stretch reads AIILILLGVVMFIVSFIGVLA. The Cytoplasmic portion of the chain corresponds to 84 to 93; the sequence is SLRDNLCLLQ. A helical membrane pass occupies residues 94–114; the sequence is AFMYILGICLIIELIGGVVAL. The Extracellular segment spans residues 115–235; the sequence is IFRNQTIDFL…WFTDNYTIMA (121 aa). Residue N118 is glycosylated (N-linked (GlcNAc...) asparagine). Cystine bridges form between C154–C219, C155–C185, C171–C179, and C186–C198. 2 N-linked (GlcNAc...) asparagine glycosylation sites follow: N189 and N230. Residues 236–256 form a helical membrane-spanning segment; the sequence is GVLLGILLPQFLGVLLTFLYI. At 257 to 294 the chain is on the cytoplasmic side; the sequence is TRVEDIITEHSVTDGLLGPGTKAGVEAAGTGCCMCYPI.

This sequence belongs to the tetraspanin (TM4SF) family. In terms of assembly, interacts with ADAM10; the interaction influences ADAM10 substrate specificity, endocytosis and turnover. Post-translationally, palmitoylated.

The protein localises to the cell membrane. Its subcellular location is the late endosome membrane. Part of TspanC8 subgroup, composed of 6 members that interact with the transmembrane metalloprotease ADAM10. This interaction is required for ADAM10 exit from the endoplasmic reticulum and for enzymatic maturation and trafficking to the cell surface as well as substrate specificity. Different TspanC8/ADAM10 complexes have distinct substrates. Promotes ADAM10-mediated cleavage of CDH2. Negatively regulates ligand-induced Notch activity probably by regulating ADAM10 activity. This chain is Tetraspanin-15 (TSPAN15), found in Bos taurus (Bovine).